Here is a 482-residue protein sequence, read N- to C-terminus: Putative fatty acid desaturase 2-like protein FADS2B (482 aa).

The interval 1-31 (MKFEEKCGDNGSIVGRNQSYPGEKHQPKGKP) is disordered. Topologically, residues 1 to 167 (MKFEEKCGDN…EAMNMFHANL (167 aa)) are cytoplasmic. In terms of domain architecture, Cytochrome b5 heme-binding spans 56-132 (LSMYTWLEIQ…LKPLLIGELA (77 aa)). Heme-binding residues include His-90 and His-113. A helical transmembrane segment spans residues 168–188 (GFFFLHFVQILILEVLAWLIV). Residues 189–190 (YH) lie on the Lumenal side of the membrane. A helical transmembrane segment spans residues 191–211 (FGSGWPVTMFISFLLTISQAS). Residues 212–305 (SSFLQHDAGH…YEEQHLYFYK (94 aa)) are Cytoplasmic-facing. The Histidine box-1 signature appears at 217–221 (HDAGH). Positions 254–258 (HFEQH) match the Histidine box-2 motif. Residues 306 to 326 (VWLPLFMPVYLKLPSMQAMYL) traverse the membrane as a helical segment. Over 327–343 (QRYWVCFSLQDITWVSS) the chain is Lumenal. Residues 344-364 (FYIYFITFGLYYGIFGTMLLI) form a helical membrane-spanning segment. Topologically, residues 365-482 (YLVKFLESPW…AALWADAYYE (118 aa)) are cytoplasmic. The Histidine box-3 motif lies at 421-425 (QIEHH).

The protein belongs to the fatty acid desaturase type 1 family.

The protein resides in the endoplasmic reticulum membrane. Its pathway is lipid metabolism; polyunsaturated fatty acid biosynthesis. This is Putative fatty acid desaturase 2-like protein FADS2B from Homo sapiens (Human).